Reading from the N-terminus, the 627-residue chain is Protein EXECUTER 2, chloroplastic (627 aa).

Disordered regions lie at residues 1-34, 212-277, and 308-359; these read MSAA…PSAA, PTKG…AKDS, and EAEL…SKSP. A chloroplast-targeting transit peptide spans 1–45; the sequence is MSAATACASPAAARPPLHIPLRSPPSAAHLPSAAASRRASSAACR. Over residues 217 to 229 the composition is skewed to low complexity; it reads SSASSVSSATAES. Composition is skewed to acidic residues over residues 308–321 and 331–353; these read EAEL…ELVQ and SLED…SDSA.

The protein localises to the plastid. It localises to the chloroplast. Functionally, together with EX1, enables higher plants to perceive singlet oxygen as a stress signal in plastid that activates a genetically determined nuclear stress response program which triggers a programmed cell death (PCD). This transfer of singlet oxygen-induced stress-related signals from the plastid to the nucleus that triggers genetically controlled PCD pathway is unique to photosynthetic eukaryotes and operates under mild stress conditions, impeding photosystem II (PSII) without causing photooxidative damage of the plant. This Oryza sativa subsp. japonica (Rice) protein is Protein EXECUTER 2, chloroplastic.